An 856-amino-acid chain; its full sequence is Facilitated trehalose transporter Tret1 (856 aa).

Disordered stretches follow at residues 1-29 (MSGR…LKEK) and 62-202 (DPFL…KATS). Over 1 to 389 (MSGRDNRGAG…LEVYRPTTNP (389 aa)) the chain is Cytoplasmic. Over residues 69-80 (VSPQRHPQTVRT) the composition is skewed to polar residues. Positions 133-142 (EIREHRDRQQ) are enriched in basic and acidic residues. A compositionally biased stretch (polar residues) spans 170–180 (GNSNTNSNKAA). Serine 247, serine 248, serine 249, serine 319, and serine 321 each carry phosphoserine. The disordered stretch occupies residues 326-345 (LTSRQHFQQQRSISTDSRKS). A compositionally biased stretch (polar residues) spans 329 to 340 (RQHFQQQRSIST). Residues 390-410 (IFIWTQVIAALSVSLGSLVVG) traverse the membrane as a helical segment. Residues 411–439 (FVSAYTSPALVSMSDPNITSFTVTKDAGS) lie on the Extracellular side of the membrane. Residue asparagine 427 is glycosylated (N-linked (GlcNAc...) asparagine). A helical transmembrane segment spans residues 440 to 460 (WVGGIMPLAGLVGGVAGGPLI). The Cytoplasmic segment spans residues 461 to 472 (EYMGRRNTILAT). Residues 473–493 (AVPFIVSSLLIACAVNVAMVL) traverse the membrane as a helical segment. Residues 494–496 (CGR) are Extracellular-facing. A helical membrane pass occupies residues 497–517 (FLAGFCVGIASLSLPVYLGET). Topologically, residues 518–527 (VQPEVRGTLG) are cytoplasmic. A helical transmembrane segment spans residues 528–548 (LLPTAFGNIGILVCFVAGSFM). A glycan (N-linked (GlcNAc...) asparagine) is linked at asparagine 549. Residues 549–551 (NWS) lie on the Extracellular side of the membrane. The helical transmembrane segment at 552–572 (MLAFLGAALPVPFLILMFLIP) threads the bilayer. Residues 573–635 (ETPRWYVSRG…ELLKRNNLKP (63 aa)) lie on the Cytoplasmic side of the membrane. A helical transmembrane segment spans residues 636–656 (LSISLGLMFFQQFSGINAVIF). The Extracellular portion of the chain corresponds to 657 to 672 (YTVQIFKDAGSTIDGN). A helical membrane pass occupies residues 673–693 (VCTIIVGVVNFVATFIGILLI). The Cytoplasmic portion of the chain corresponds to 694–699 (DRAGRK). The helical transmembrane segment at 700–720 (ILLYASDIAMVLTLFVLGGFF) threads the bilayer. Residues 721–739 (YCKAHGPDVSHLGWLPLTC) lie on the Extracellular side of the membrane. The helical transmembrane segment at 740–760 (FVVYILGFSVGFGPIPWLMMG) threads the bilayer. Topologically, residues 761 to 766 (EILPAK) are cytoplasmic. The helical transmembrane segment at 767–787 (IRGAAASVATSFNWTCTFVVT) threads the bilayer. Residues 788–800 (KTFQDLVGSLGAH) are Extracellular-facing. Residues 801-821 (GAFWLFGAICFVGLFFVILYV) form a helical membrane-spanning segment. Residues 822 to 856 (PETQGKTLEDIERKMMGRVRRMSSVANIKPLSFNM) lie on the Cytoplasmic side of the membrane. Phosphoserine occurs at positions 844 and 845.

The protein belongs to the major facilitator superfamily. Sugar transporter (TC 2.A.1.1) family. Trehalose transporter subfamily.

The protein localises to the cell membrane. Low-capacity facilitative transporter for trehalose. Does not transport maltose, sucrose or lactose. Mediates the bidirectional transfer of trehalose. Responsible for the transport of trehalose synthesized in the fat body and the incorporation of trehalose into other tissues that require a carbon source, thereby regulating trehalose levels in the hemolymph. The protein is Facilitated trehalose transporter Tret1 of Drosophila yakuba (Fruit fly).